A 128-amino-acid polypeptide reads, in one-letter code: Small ribosomal subunit protein eS8 (128 aa).

The interval 1-37 (MGYFQGNDFRKITGGKKGKHRDKRKFELGSPPTETKL) is disordered. Positions 13–23 (TGGKKGKHRDK) are enriched in basic residues.

Belongs to the eukaryotic ribosomal protein eS8 family. Part of the 30S ribosomal subunit.

The protein is Small ribosomal subunit protein eS8 of Sulfurisphaera tokodaii (strain DSM 16993 / JCM 10545 / NBRC 100140 / 7) (Sulfolobus tokodaii).